A 172-amino-acid chain; its full sequence is L-amino acid oxidase (172 aa).

44–47 (GPMR) contacts FAD. Substrate-binding residues include Arg-47 and His-103.

This sequence belongs to the flavin monoamine oxidase family. FIG1 subfamily. As to quaternary structure, heterodimer; non-covalently linked. FAD serves as cofactor. N-glycosylated. Expressed by the venom gland.

The protein localises to the secreted. It carries out the reaction an L-alpha-amino acid + O2 + H2O = a 2-oxocarboxylate + H2O2 + NH4(+). The enzyme catalyses L-leucine + O2 + H2O = 4-methyl-2-oxopentanoate + H2O2 + NH4(+). It catalyses the reaction L-phenylalanine + O2 + H2O = 3-phenylpyruvate + H2O2 + NH4(+). The catalysed reaction is L-tryptophan + O2 + H2O = indole-3-pyruvate + H2O2 + NH4(+). It carries out the reaction L-methionine + O2 + H2O = 4-methylsulfanyl-2-oxobutanoate + H2O2 + NH4(+). The enzyme catalyses L-isoleucine + O2 + H2O = (S)-3-methyl-2-oxopentanoate + H2O2 + NH4(+). It catalyses the reaction L-arginine + O2 + H2O = 5-guanidino-2-oxopentanoate + H2O2 + NH4(+). The catalysed reaction is L-tyrosine + O2 + H2O = 3-(4-hydroxyphenyl)pyruvate + H2O2 + NH4(+). Activity is increased by Mn(2+) ions. Inhibited by Zn(2+), Ni(2+), Co(2+), Cu(2+) and Al(3+). No significant activity change by Na(+), K(+), Ca(2+), Mg(2+) and Ba(2+) ions. Both isoform are completely inhibited by L-Cys and reduced glutathione. O-phenanthroline, beta-mercaptoethanol and PMSF completely inhibit the enzymatic activity of LAAOII, but have no activity on LAAOI. Iodoacetic acid inhibits the enzymatic activity of LAAOII by 46% but has no effect on the LAAOI activity. Catalyzes an oxidative deamination of predominantly hydrophobic and aromatic L-amino acids, thus producing hydrogen peroxide that may contribute to the diverse toxic effects of this enzyme. Shows high specificity for L-Arg, L-Met, L-Phe, L-Leu, L-Tyr, L-Ile and L-Trp, low specificity for L-Val, L-Ala, L-Asn, L-Gln, and no specificity for L-Pro, L-Ser, L-Thr, L-Cys, L-Gly and L-Asp. Exhibits diverse biological activities, such as hemorrhage, hemolysis, edema, antibacterial and antiparasitic activities, as well as regulation of platelet aggregation. Its effect on platelets is controversial, since it either induces aggregation or inhibits agonist-induced aggregation. These different effects are probably due to different experimental conditions. This is L-amino acid oxidase from Cerastes cerastes (Horned desert viper).